We begin with the raw amino-acid sequence, 332 residues long: Putative potassium channel regulatory protein sup-10 (332 aa).

A signal peptide spans 1–18 (MRYAVFIFLIVLIDLIYC). At 19–301 (WNSKRSFFIP…EISERNKRPA (283 aa)) the chain is on the extracellular side. Asparagine 61, asparagine 107, and asparagine 166 each carry an N-linked (GlcNAc...) asparagine glycan. The chain crosses the membrane as a helical span at residues 302–322 (FVLVGLTGGIAVIILAFSIFW). Residues 323 to 332 (GLNGSGFNKD) lie on the Cytoplasmic side of the membrane.

May form a complex with sup-9 and unc-93 where sup-10 and unc-93 act as regulatory subunits of the two pore potassium channel sup-9. Sup-10 may regulate sup-9 via sup-18. Low levels in body-wall muscles, eight vulval muscles, intestinal muscles and anal depressor muscle.

Its subcellular location is the membrane. In terms of biological role, may contribute to coordination of muscle contraction as regulatory subunit of a nonessential potassium channel complex. In Caenorhabditis elegans, this protein is Putative potassium channel regulatory protein sup-10.